A 260-amino-acid polypeptide reads, in one-letter code: Cystine transporter (260 aa).

One can recognise a PQ-loop 1 domain in the interval 1-67; the sequence is MVSLDDILGI…QLYCWKMTGD (67 aa). 5 helical membrane passes run 7-28, 40-62, 81-102, 118-138, and 151-175; these read ILGI…ITNW, FVML…LYCW, FWYC…VAGA, WYLR…VQFM, and TLAY…PQVT. The region spanning 162-212 is the PQ-loop 2 domain; it reads KISMSLIKYIPQVTHNSTRKSMDCFPIQGVFLDVTGGIASLLQLIWQLSND. A glycan (N-linked (GlcNAc...) asparagine) is linked at N177. The next 2 membrane-spanning stretches (helical) occupy residues 185 to 205 and 227 to 247; these read CFPI…LLQL and VGLS…WFVY.

This sequence belongs to the cystinosin family.

The protein resides in the endosome membrane. It is found in the vacuole membrane. The enzyme catalyses L-cystine(out) + H(+)(out) = L-cystine(in) + H(+)(in). Functionally, cystine/H(+) symporter that mediates export of cystine, the oxidized dimer of cysteine, from vacuoles/endodomes. This Saccharomyces cerevisiae (strain ATCC 204508 / S288c) (Baker's yeast) protein is Cystine transporter (ERS1).